We begin with the raw amino-acid sequence, 625 residues long: DNA mismatch repair protein MutL (625 aa).

This sequence belongs to the DNA mismatch repair MutL/HexB family.

This protein is involved in the repair of mismatches in DNA. It is required for dam-dependent methyl-directed DNA mismatch repair. May act as a 'molecular matchmaker', a protein that promotes the formation of a stable complex between two or more DNA-binding proteins in an ATP-dependent manner without itself being part of a final effector complex. This chain is DNA mismatch repair protein MutL, found in Azorhizobium caulinodans (strain ATCC 43989 / DSM 5975 / JCM 20966 / LMG 6465 / NBRC 14845 / NCIMB 13405 / ORS 571).